Consider the following 112-residue polypeptide: Large ribosomal subunit protein uL22 (112 aa).

Belongs to the universal ribosomal protein uL22 family. As to quaternary structure, part of the 50S ribosomal subunit.

This protein binds specifically to 23S rRNA; its binding is stimulated by other ribosomal proteins, e.g. L4, L17, and L20. It is important during the early stages of 50S assembly. It makes multiple contacts with different domains of the 23S rRNA in the assembled 50S subunit and ribosome. Its function is as follows. The globular domain of the protein is located near the polypeptide exit tunnel on the outside of the subunit, while an extended beta-hairpin is found that lines the wall of the exit tunnel in the center of the 70S ribosome. This is Large ribosomal subunit protein uL22 from Moorella thermoacetica (strain ATCC 39073 / JCM 9320).